The primary structure comprises 131 residues: MIIGLGNDLVDIRRIEDSLERFGERFIAKVFTEAERATAERRSGRARSGAYAKRFAAKEALVKALGKDGVSWRDIEVANDGDGRPFLSLSGGAAALLARRIPAGMIARLHLSLSDDYPLAQAVVIVEAQPA.

Mg(2+) contacts are provided by aspartate 8 and glutamate 59.

This sequence belongs to the P-Pant transferase superfamily. AcpS family. It depends on Mg(2+) as a cofactor.

The protein resides in the cytoplasm. The enzyme catalyses apo-[ACP] + CoA = holo-[ACP] + adenosine 3',5'-bisphosphate + H(+). Transfers the 4'-phosphopantetheine moiety from coenzyme A to a Ser of acyl-carrier-protein. This Paramagnetospirillum magneticum (strain ATCC 700264 / AMB-1) (Magnetospirillum magneticum) protein is Holo-[acyl-carrier-protein] synthase.